Reading from the N-terminus, the 402-residue chain is L-threonine ammonia-lyase (402 aa).

Residue Lys-51 is modified to N6-(pyridoxal phosphate)lysine. Pyridoxal 5'-phosphate-binding positions include Asn-78, 178 to 181 (GGGL), and Ser-302. Residues 327 to 402 (KLKVELDDLP…GVGYLVDVLK (76 aa)) form the ACT domain.

This sequence belongs to the serine/threonine dehydratase family. Requires pyridoxal 5'-phosphate as cofactor.

It carries out the reaction L-threonine = 2-oxobutanoate + NH4(+). The enzyme catalyses L-serine = pyruvate + NH4(+). The protein operates within amino-acid biosynthesis; L-isoleucine biosynthesis; 2-oxobutanoate from L-threonine: step 1/1. In terms of biological role, catalyzes the conversion of threonine to 2-oxobutanoate and ammonia. Functions in the threonine-dependent pathway of isoleucine biosynthesis, which is the minor pathway for isoleucine biosynthesis in G.sulfurreducens. Also displays serine ammonia-lyase activity, yielding pyruvate from L-serine. This is L-threonine ammonia-lyase from Geobacter sulfurreducens (strain ATCC 51573 / DSM 12127 / PCA).